Reading from the N-terminus, the 224-residue chain is tRNA (guanine-N(7)-)-methyltransferase (224 aa).

E45, E70, D97, and D119 together coordinate S-adenosyl-L-methionine. D119 is an active-site residue. Substrate is bound by residues K123, D155, and 199–202; that span reads TEYE.

Belongs to the class I-like SAM-binding methyltransferase superfamily. TrmB family.

It carries out the reaction guanosine(46) in tRNA + S-adenosyl-L-methionine = N(7)-methylguanosine(46) in tRNA + S-adenosyl-L-homocysteine. It participates in tRNA modification; N(7)-methylguanine-tRNA biosynthesis. In terms of biological role, catalyzes the formation of N(7)-methylguanine at position 46 (m7G46) in tRNA. The protein is tRNA (guanine-N(7)-)-methyltransferase of Ureaplasma parvum serovar 3 (strain ATCC 27815 / 27 / NCTC 11736).